A 1305-amino-acid chain; its full sequence is Serine protease EspC (1305 aa).

The signal sequence occupies residues 1-53 (MNKIYALKYCHATGGLIAVSELASRVMKKAARGSLLALFNLSLYGAFLSASQA). The region spanning 55 to 297 (QLNIDNVWAR…SILNQYDENT (243 aa)) is the Peptidase S6 domain. Residues histidine 125, aspartate 153, and serine 256 each act as charge relay system in the active site. The region spanning 1039–1305 (DTQGDAGVWA…AINANFRYSF (267 aa)) is the Autotransporter domain.

Cleaved to release the mature protein from the outer membrane.

It localises to the periplasm. Its subcellular location is the secreted. The protein localises to the cell surface. The protein resides in the cell outer membrane. Inhibition of cytotoxic activity by phenylmethylsulfonyl fluoride. Functionally, serine protease with enterotoxic and cytotoxic activities. Cleaves fodrin, but does not cause its redistribution within epithelial cells. The exact role of EspC in EPEC pathogenesis is still unknown. In Escherichia coli O127:H6 (strain E2348/69 / EPEC), this protein is Serine protease EspC (espC).